Here is a 372-residue protein sequence, read N- to C-terminus: L-selectin (372 aa).

The first 28 residues, Met-1–Cys-28, serve as a signal peptide directing secretion. Positions Asp-29–Cys-38 are excised as a propeptide. Residues Trp-39 to Asn-332 are Extracellular-facing. The 101-residue stretch at Arg-55–Cys-155 folds into the C-type lectin domain. 10 disulfides stabilise this stretch: Cys-57–Cys-155, Cys-128–Cys-147, Cys-128–Cys-160, Cys-160–Cys-171, Cys-165–Cys-180, Cys-182–Cys-191, Cys-197–Cys-241, Cys-227–Cys-254, Cys-259–Cys-303, and Cys-289–Cys-316. Asn-60 and Asn-104 each carry an N-linked (GlcNAc...) asparagine glycan. Residues Glu-118, Asn-120, Glu-126, Asn-143, and Asp-144 each contribute to the Ca(2+) site. Residues Tyr-156–Gln-192 form the EGF-like domain. Asn-177 carries N-linked (GlcNAc...) asparagine glycosylation. Sushi domains lie at Ile-195–Val-256 and Ile-257–Lys-318. Residues Asn-226, Asn-232, Asn-246, and Asn-271 are each glycosylated (N-linked (GlcNAc...) asparagine). Residues Pro-333 to Ala-355 traverse the membrane as a helical segment. Residues Arg-356–Tyr-372 lie on the Cytoplasmic side of the membrane.

Belongs to the selectin/LECAM family. Interaction with SELPLG/PSGL1 and PODXL2 is required for promoting recruitment and rolling of leukocytes. This interaction is dependent on the sialyl Lewis X glycan modification of SELPLG and PODXL2, and tyrosine sulfation modifications of SELPLG. Sulfation on 'Tyr-51' of SELPLG is important for L-selectin binding. In terms of processing, N-glycosylated.

The protein resides in the cell membrane. In terms of biological role, calcium-dependent lectin that mediates cell adhesion by binding to glycoproteins on neighboring cells. Mediates the adherence of lymphocytes to endothelial cells of high endothelial venules in peripheral lymph nodes. Promotes initial tethering and rolling of leukocytes in endothelia. In Papio hamadryas (Hamadryas baboon), this protein is L-selectin (SELL).